Consider the following 501-residue polypeptide: Glycerol kinase (501 aa).

Thr17 is an ADP binding site. ATP-binding residues include Thr17, Thr18, and Ser19. Thr17 contacts sn-glycerol 3-phosphate. Arg21 is a binding site for ADP. 4 residues coordinate sn-glycerol 3-phosphate: Arg87, Glu88, Tyr139, and Asp243. The glycerol site is built by Arg87, Glu88, Tyr139, Asp243, and Gln244. The ADP site is built by Thr265 and Gly308. ATP is bound by residues Thr265, Gly308, Gln312, and Gly409. Positions 409 and 413 each coordinate ADP.

It belongs to the FGGY kinase family.

It catalyses the reaction glycerol + ATP = sn-glycerol 3-phosphate + ADP + H(+). It participates in polyol metabolism; glycerol degradation via glycerol kinase pathway; sn-glycerol 3-phosphate from glycerol: step 1/1. With respect to regulation, inhibited by fructose 1,6-bisphosphate (FBP). In terms of biological role, key enzyme in the regulation of glycerol uptake and metabolism. Catalyzes the phosphorylation of glycerol to yield sn-glycerol 3-phosphate. This chain is Glycerol kinase, found in Pseudomonas savastanoi pv. phaseolicola (strain 1448A / Race 6) (Pseudomonas syringae pv. phaseolicola (strain 1448A / Race 6)).